We begin with the raw amino-acid sequence, 364 residues long: UDP-N-acetylenolpyruvoylglucosamine reductase (364 aa).

The FAD-binding PCMH-type domain occupies 30–196; that stretch reads LGGPATRLIT…LRVRFELEDA (167 aa). Residue Arg173 is part of the active site. The Proton donor role is filled by Ser252. Residue Glu356 is part of the active site.

The protein belongs to the MurB family. The cofactor is FAD.

The protein resides in the cytoplasm. It catalyses the reaction UDP-N-acetyl-alpha-D-muramate + NADP(+) = UDP-N-acetyl-3-O-(1-carboxyvinyl)-alpha-D-glucosamine + NADPH + H(+). It participates in cell wall biogenesis; peptidoglycan biosynthesis. In terms of biological role, cell wall formation. The protein is UDP-N-acetylenolpyruvoylglucosamine reductase of Streptomyces avermitilis (strain ATCC 31267 / DSM 46492 / JCM 5070 / NBRC 14893 / NCIMB 12804 / NRRL 8165 / MA-4680).